The chain runs to 151 residues: D-aminoacyl-tRNA deacylase (151 aa).

The short motif at 138–139 is the Gly-cisPro motif, important for rejection of L-amino acids element; the sequence is GP.

The protein belongs to the DTD family. As to quaternary structure, homodimer.

The protein localises to the cytoplasm. The catalysed reaction is glycyl-tRNA(Ala) + H2O = tRNA(Ala) + glycine + H(+). The enzyme catalyses a D-aminoacyl-tRNA + H2O = a tRNA + a D-alpha-amino acid + H(+). In terms of biological role, an aminoacyl-tRNA editing enzyme that deacylates mischarged D-aminoacyl-tRNAs. Also deacylates mischarged glycyl-tRNA(Ala), protecting cells against glycine mischarging by AlaRS. Acts via tRNA-based rather than protein-based catalysis; rejects L-amino acids rather than detecting D-amino acids in the active site. By recycling D-aminoacyl-tRNA to D-amino acids and free tRNA molecules, this enzyme counteracts the toxicity associated with the formation of D-aminoacyl-tRNA entities in vivo and helps enforce protein L-homochirality. The protein is D-aminoacyl-tRNA deacylase of Picosynechococcus sp. (strain ATCC 27264 / PCC 7002 / PR-6) (Agmenellum quadruplicatum).